Consider the following 335-residue polypeptide: tRNA N6-adenosine threonylcarbamoyltransferase (335 aa).

Fe cation-binding residues include His111 and His115. Substrate is bound by residues 133–137 (IISGG), Asp166, Gly179, Asp183, and Asn268. Residue Asp296 coordinates Fe cation.

It belongs to the KAE1 / TsaD family. The cofactor is Fe(2+).

The protein resides in the cytoplasm. It catalyses the reaction L-threonylcarbamoyladenylate + adenosine(37) in tRNA = N(6)-L-threonylcarbamoyladenosine(37) in tRNA + AMP + H(+). Functionally, required for the formation of a threonylcarbamoyl group on adenosine at position 37 (t(6)A37) in tRNAs that read codons beginning with adenine. Is involved in the transfer of the threonylcarbamoyl moiety of threonylcarbamoyl-AMP (TC-AMP) to the N6 group of A37, together with TsaE and TsaB. TsaD likely plays a direct catalytic role in this reaction. This chain is tRNA N6-adenosine threonylcarbamoyltransferase, found in Aquifex aeolicus (strain VF5).